The sequence spans 404 residues: E3 ubiquitin-protein ligase RNF128 (404 aa).

An N-terminal signal peptide occupies residues 1 to 31 (MGALKMRCQCFPLPYLSLLALLLLNLSLTRA). The 105-residue stretch at 62 to 166 (DSPIERAAGL…LKGNEIVDLI (105 aa)) folds into the PA domain. A helical transmembrane segment spans residues 191–211 (IFFVSVSFFIVTAATVGYFIF). The RING-type; atypical zinc finger occupies 260–301 (CAVCIEPYKPSDVVRILTCNHFFHKNCIDPWLLEHRTCPMCK). Residues 336 to 356 (ITEEENHSETASSGYASVRGG) form a disordered region.

Auto-ubiquitinated. As to expression, expressed in the cement gland, cranial placodes, and the pronephros.

The protein resides in the endomembrane system. Its subcellular location is the cytoplasm. It is found in the perinuclear region. It carries out the reaction S-ubiquitinyl-[E2 ubiquitin-conjugating enzyme]-L-cysteine + [acceptor protein]-L-lysine = [E2 ubiquitin-conjugating enzyme]-L-cysteine + N(6)-ubiquitinyl-[acceptor protein]-L-lysine.. Its pathway is protein modification; protein ubiquitination. E3 ubiquitin-protein ligase that catalyzes polyubiquitin chains. Converts epidermis into cement gland and neural tissue in whole embryos. The protein is E3 ubiquitin-protein ligase RNF128 (rnf128) of Xenopus laevis (African clawed frog).